Reading from the N-terminus, the 301-residue chain is Pantothenate synthetase (301 aa).

ATP is bound at residue 30-37 (MGNLHEGH). Histidine 37 functions as the Proton donor in the catalytic mechanism. A (R)-pantoate-binding site is contributed by glutamine 61. Glutamine 61 serves as a coordination point for beta-alanine. An ATP-binding site is contributed by 149 to 152 (GEKD). Glutamine 155 contacts (R)-pantoate. ATP-binding positions include valine 178 and 186 to 189 (MSSR).

The protein belongs to the pantothenate synthetase family. Homodimer.

It localises to the cytoplasm. It carries out the reaction (R)-pantoate + beta-alanine + ATP = (R)-pantothenate + AMP + diphosphate + H(+). Its pathway is cofactor biosynthesis; (R)-pantothenate biosynthesis; (R)-pantothenate from (R)-pantoate and beta-alanine: step 1/1. Its function is as follows. Catalyzes the condensation of pantoate with beta-alanine in an ATP-dependent reaction via a pantoyl-adenylate intermediate. The protein is Pantothenate synthetase of Vibrio vulnificus (strain YJ016).